Reading from the N-terminus, the 505-residue chain is Lysine--tRNA ligase (505 aa).

The Mg(2+) site is built by glutamate 415 and glutamate 422.

This sequence belongs to the class-II aminoacyl-tRNA synthetase family. In terms of assembly, homodimer. Mg(2+) is required as a cofactor.

The protein resides in the cytoplasm. The catalysed reaction is tRNA(Lys) + L-lysine + ATP = L-lysyl-tRNA(Lys) + AMP + diphosphate. This chain is Lysine--tRNA ligase, found in Enterobacter sp. (strain 638).